The sequence spans 470 residues: ATP synthase subunit beta (470 aa).

157–164 contacts ATP; the sequence is GGAGVGKT.

It belongs to the ATPase alpha/beta chains family. As to quaternary structure, F-type ATPases have 2 components, CF(1) - the catalytic core - and CF(0) - the membrane proton channel. CF(1) has five subunits: alpha(3), beta(3), gamma(1), delta(1), epsilon(1). CF(0) has three main subunits: a(1), b(2) and c(9-12). The alpha and beta chains form an alternating ring which encloses part of the gamma chain. CF(1) is attached to CF(0) by a central stalk formed by the gamma and epsilon chains, while a peripheral stalk is formed by the delta and b chains.

The protein resides in the cell membrane. The catalysed reaction is ATP + H2O + 4 H(+)(in) = ADP + phosphate + 5 H(+)(out). In terms of biological role, produces ATP from ADP in the presence of a proton gradient across the membrane. The catalytic sites are hosted primarily by the beta subunits. The protein is ATP synthase subunit beta of Pelotomaculum thermopropionicum (strain DSM 13744 / JCM 10971 / SI).